The chain runs to 339 residues: DNA-directed RNA polymerase subunit alpha (339 aa).

The segment at 1-233 is alpha N-terminal domain (alpha-NTD); sequence MVREEVAGST…DLFLPFLHAE (233 aa). Residues 264–339 are alpha C-terminal domain (alpha-CTD); the sequence is KKGIPLNYIF…IDLLKNKLSF (76 aa).

This sequence belongs to the RNA polymerase alpha chain family. As to quaternary structure, in plastids the minimal PEP RNA polymerase catalytic core is composed of four subunits: alpha, beta, beta', and beta''. When a (nuclear-encoded) sigma factor is associated with the core the holoenzyme is formed, which can initiate transcription.

It localises to the plastid. Its subcellular location is the chloroplast. The catalysed reaction is RNA(n) + a ribonucleoside 5'-triphosphate = RNA(n+1) + diphosphate. Its function is as follows. DNA-dependent RNA polymerase catalyzes the transcription of DNA into RNA using the four ribonucleoside triphosphates as substrates. The polypeptide is DNA-directed RNA polymerase subunit alpha (Psathyrostachys rupestris (Hordeum rupestre)).